Reading from the N-terminus, the 515-residue chain is Cytochrome P450 monooxygenase janP (515 aa).

Residues glycine 20–leucine 36 traverse the membrane as a helical segment. Cysteine 456 is a binding site for heme. An N-linked (GlcNAc...) asparagine glycan is attached at asparagine 501.

The protein belongs to the cytochrome P450 family. It depends on heme as a cofactor.

Its subcellular location is the membrane. Its pathway is secondary metabolite biosynthesis. Functionally, cytochrome P450 monooxygenase; part of the gene cluster that mediates the biosynthesis of the indole diterpenes janthitremanes such as shearinine K or shearinine A. The geranylgeranyl diphosphate (GGPP) synthase janG catalyzes the first step in janthitremane biosynthesis via conversion of farnesyl pyrophosphate and isopentyl pyrophosphate into geranylgeranyl pyrophosphate (GGPP). Condensation of indole-3-glycerol phosphate with GGPP by the prenyl transferase janC then forms 3-geranylgeranylindole (3-GGI). Epoxidation by the FAD-dependent monooxygenase janM leads to a epoxidized-GGI that is substrate of the terpene cyclase janB for cyclization to yield paspaline. Paspaline is subsequently converted to 13-desoxypaspaline by the cytochrome P450 monooxygenase janP, via beta-PC-M6 in a series of alpha-face oxidations. The cytochrome P450 monooxygenase janQ is proposed to carry out sequential beta-face oxidation steps at C-7 and C-13 of 13-desoxypaspaline to form paspalicine and paspalinine respectively. The indole diterpene prenyltransferase janD may then convert paspalinine into shearinine K which is substrate of janO and/or additional enzymes for oxidation and cyclization to generate shearinine A. This chain is Cytochrome P450 monooxygenase janP, found in Penicillium janthinellum (Penicillium vitale).